The chain runs to 252 residues: Serine/threonine phosphatase stp (252 aa).

Residues 1–18 (MHAEFRTDRGRIRHHNED) are compositionally biased toward basic and acidic residues. A disordered region spans residues 1 to 23 (MHAEFRTDRGRIRHHNEDNGGVF). The PPM-type phosphatase domain maps to 2-242 (HAEFRTDRGR…DNITVLLVER (241 aa)). Mn(2+)-binding residues include Asp-36, Gly-37, Asp-194, and Asp-233.

This sequence belongs to the PP2C family. Requires Mn(2+) as cofactor.

It is found in the cytoplasm. Its subcellular location is the membrane. It carries out the reaction O-phospho-L-seryl-[protein] + H2O = L-seryl-[protein] + phosphate. The catalysed reaction is O-phospho-L-threonyl-[protein] + H2O = L-threonyl-[protein] + phosphate. Functionally, protein phosphatase that dephosphorylates EF-Tu. The sequence is that of Serine/threonine phosphatase stp (stp) from Listeria monocytogenes serotype 4b (strain F2365).